The primary structure comprises 100 residues: Urease subunit gamma (100 aa).

It belongs to the urease gamma subunit family. In terms of assembly, heterotrimer of UreA (gamma), UreB (beta) and UreC (alpha) subunits. Three heterotrimers associate to form the active enzyme.

The protein resides in the cytoplasm. The catalysed reaction is urea + 2 H2O + H(+) = hydrogencarbonate + 2 NH4(+). The protein operates within nitrogen metabolism; urea degradation; CO(2) and NH(3) from urea (urease route): step 1/1. This chain is Urease subunit gamma, found in Escherichia coli O157:H7 (strain EC4115 / EHEC).